Consider the following 591-residue polypeptide: Aspartate--tRNA ligase (591 aa).

Residue E173 coordinates L-aspartate. The interval 197–200 (QLFK) is aspartate. R219 provides a ligand contact to L-aspartate. ATP is bound by residues 219 to 221 (RDE) and Q228. An L-aspartate-binding site is contributed by H448. E482 is a binding site for ATP. Position 489 (R489) interacts with L-aspartate. Residue 534–537 (GLDR) coordinates ATP.

It belongs to the class-II aminoacyl-tRNA synthetase family. Type 1 subfamily. As to quaternary structure, homodimer.

Its subcellular location is the cytoplasm. It catalyses the reaction tRNA(Asp) + L-aspartate + ATP = L-aspartyl-tRNA(Asp) + AMP + diphosphate. Its function is as follows. Catalyzes the attachment of L-aspartate to tRNA(Asp) in a two-step reaction: L-aspartate is first activated by ATP to form Asp-AMP and then transferred to the acceptor end of tRNA(Asp). The sequence is that of Aspartate--tRNA ligase from Shewanella amazonensis (strain ATCC BAA-1098 / SB2B).